A 1149-amino-acid chain; its full sequence is Guanine nucleotide exchange factor DBS (1149 aa).

The CRAL-TRIO domain maps to 52 to 224 (AATASDEIMH…DLGGTLDYCH (173 aa)). A Spectrin repeat occupies 351-456 (LQLRHFEQGF…VTRRRGLLSK (106 aa)). Phosphoserine is present on residues Ser457, Ser462, Ser471, and Ser480. A coiled-coil region spans residues 503–529 (LETGAENKIQELNEIYKEYECILNQDL). A disordered region spans residues 555 to 627 (KKLAAKQTRP…RTSSTGEEEE (73 aa)). Positions 583-594 (PGSWRSSENSSS) are enriched in low complexity. A compositionally biased stretch (basic and acidic residues) spans 607 to 616 (AKSEMSEPRQ). Ser621 carries the phosphoserine modification. Phosphothreonine is present on Thr622. In terms of domain architecture, DH spans 632–812 (LRRHVMNELL…LGILKAVNDS (181 aa)). The PH domain maps to 841–950 (TDHKKGHTKV…IRKVLTSQLQ (110 aa)). Residues 956–1033 (SQHRALEQSH…EAPEEDGGWS (78 aa)) form a disordered region. The span at 966 to 978 (SLPLPTPSSTSPT) shows a compositional bias: low complexity. 4 positions are modified to phosphoserine: Ser1033, Ser1034, Ser1041, and Ser1042. The 62-residue stretch at 1055–1116 (LVPGKYTVVM…PASSLSTLLG (62 aa)) folds into the SH3 domain.

It belongs to the MCF2 family. As to quaternary structure, interacts with GTP-bound RAC1. Interacts with CDC42. Interacts with RHOA. Interacts with CCPG1, which results in specific inhibition of its exchange activity toward RHOA, but does not affect its activity on CDC42. As to expression, expressed at low levels in several hemopoietic cell lines and in thymus and spleen, and at higher levels in other tissues, particularly in brain.

It localises to the cytoplasm. It is found in the cell membrane. Its function is as follows. Guanine nucleotide exchange factor that catalyzes guanine nucleotide exchange on RHOA and CDC42, and thereby contributes to the regulation of RHOA and CDC42 signaling pathways. Seems to lack activity with RAC1. Becomes activated and highly tumorigenic by truncation of the N-terminus. This is Guanine nucleotide exchange factor DBS (Mcf2l) from Mus musculus (Mouse).